We begin with the raw amino-acid sequence, 37 residues long: Large ribosomal subunit protein bL36 (37 aa).

It belongs to the bacterial ribosomal protein bL36 family.

In Acidovorax ebreus (strain TPSY) (Diaphorobacter sp. (strain TPSY)), this protein is Large ribosomal subunit protein bL36.